The following is a 351-amino-acid chain: N6-Methyl-AMP deaminase (351 aa).

The Zn(2+) site is built by His-23 and His-25. Residues His-25, Asn-27, His-73, Ser-105–Arg-108, Asp-147, and Gly-180 each bind N(6)-methyl-AMP. His-207 is a Zn(2+) binding site. N(6)-methyl-AMP-binding residues include Glu-210, Asp-292, and Asp-293. Glu-210 serves as the catalytic Proton donor. Residue Asp-292 participates in Zn(2+) binding.

Belongs to the metallo-dependent hydrolases superfamily. Adenosine and AMP deaminases family. Monomer. It depends on Zn(2+) as a cofactor.

The catalysed reaction is N(6)-methyl-AMP + H2O + H(+) = IMP + methylamine. Its function is as follows. Catalyzes the hydrolysis of the free cytosolic methylated adenosine nucleotide N(6)-methyl-AMP (N6-mAMP) to produce inositol monophosphate (IMP) and methylamine. Is required for the catabolism of cytosolic N6-mAMP, which is derived from the degradation of mRNA containing N6-methylated adenine (m6A). The polypeptide is N6-Methyl-AMP deaminase (Bos taurus (Bovine)).